The following is a 523-amino-acid chain: Transcription factor MYB120 (523 aa).

HTH myb-type domains lie at 23 to 75 and 76 to 130; these read GVIL…ANHL and RPNL…KRLL. 2 consecutive DNA-binding regions (H-T-H motif) follow at residues 51–75 and 103–126; these read WNAV…ANHL and WARM…NTRL. Disordered stretches follow at residues 140–254, 332–373, 396–426, and 444–470; these read DIIP…YPTL, QTAT…SHYT, QIPQ…GAHR, and LASG…NNTN. Residues 147–167 show a composition bias toward basic residues; it reads LHPHPHHQQQQQHNHHHHHHQ. Polar residues predominate over residues 175–185; it reads MYFQPQSSQRN. 3 stretches are compositionally biased toward low complexity: residues 202 to 212, 223 to 232, and 341 to 368; these read SSSSFTFHTTT, TPNTPSQLSS, and NPYS…PSFL. Polar residues predominate over residues 396-410; that stretch reads QIPQIDGFNNVNNFT.

As to expression, expressed in pollen grains and pollen tube. Mostly expressed in mature pollen grains, and, to a lower extent, in inflorescences and siliques.

Its subcellular location is the nucleus. Transcription activator. Binds to 5'-CAACTGTC-3' and/or 5'-TAACAAA-3' motif in target gene promoter to promote their expression. Together with MYB97 and MYB101, functions as a male factor that controls pollen tube-synergid interaction in fertilization. Required for pollen tube growth arrest and sperm cell release in the female gametophyte, probably via the regulation of pollen tube-specific gene expression. The polypeptide is Transcription factor MYB120 (Arabidopsis thaliana (Mouse-ear cress)).